The following is a 232-amino-acid chain: 5'-methylthioadenosine/S-adenosylhomocysteine nucleosidase (232 aa).

E12 serves as the catalytic Proton acceptor. Substrate-binding positions include G78, I152, and 173-174; that span reads ME. D197 serves as the catalytic Proton donor.

Belongs to the PNP/UDP phosphorylase family. MtnN subfamily. Homodimer.

It catalyses the reaction S-adenosyl-L-homocysteine + H2O = S-(5-deoxy-D-ribos-5-yl)-L-homocysteine + adenine. The enzyme catalyses S-methyl-5'-thioadenosine + H2O = 5-(methylsulfanyl)-D-ribose + adenine. It carries out the reaction 5'-deoxyadenosine + H2O = 5-deoxy-D-ribose + adenine. The protein operates within amino-acid biosynthesis; L-methionine biosynthesis via salvage pathway; S-methyl-5-thio-alpha-D-ribose 1-phosphate from S-methyl-5'-thioadenosine (hydrolase route): step 1/2. Catalyzes the irreversible cleavage of the glycosidic bond in both 5'-methylthioadenosine (MTA) and S-adenosylhomocysteine (SAH/AdoHcy) to adenine and the corresponding thioribose, 5'-methylthioribose and S-ribosylhomocysteine, respectively. Also cleaves 5'-deoxyadenosine, a toxic by-product of radical S-adenosylmethionine (SAM) enzymes, into 5-deoxyribose and adenine. Thus, is required for in vivo function of the radical SAM enzymes biotin synthase and lipoic acid synthase, that are inhibited by 5'-deoxyadenosine accumulation. This chain is 5'-methylthioadenosine/S-adenosylhomocysteine nucleosidase, found in Salmonella choleraesuis (strain SC-B67).